The sequence spans 215 residues: MKQIIAKNGLILSLFAIITSGLIALTYFGTQEQIELQRQQTLLAILDELVPRGSYDNLMQHDCVLVTSQAYLGSNSPQHIYRATRAGEPVAAVIEATAPNGYSGRIELVVGLSGDATVSGVRVIDHKETPGLGDKIDLRISDWVLGFNNQQLTQDNASNWAVKKDGGQFDQFTGATITPRAVVSAVKNTALYYQANKEAIFSASNECRSQLASQG.

Residues glycine 9 to glycine 29 form a helical membrane-spanning segment. Threonine 176 carries the FMN phosphoryl threonine modification.

The protein belongs to the RnfG family. The complex is composed of six subunits: RnfA, RnfB, RnfC, RnfD, RnfE and RnfG. FMN serves as cofactor.

It localises to the cell inner membrane. Its function is as follows. Part of a membrane-bound complex that couples electron transfer with translocation of ions across the membrane. The chain is Ion-translocating oxidoreductase complex subunit G from Pseudoalteromonas atlantica (strain T6c / ATCC BAA-1087).